Here is a 4518-residue protein sequence, read N- to C-terminus: MAASVAAQEAHGFRKVPTLSLTPGVGMEAAGLVELEEEEEEEEEEEAAARRARSFVQDARVRFVGGRLEQMLGFPEEKWSQHLESEDNRQILGEFLESPGPACLVFSIAAAGQLATSHQIPRDAKHKLVYIAKKITENTGVNDFSQTVVFGELPASSVGYVTAFLDEILVPIISNKNNHKSWSCFISQDMERHVEVMRNKMHIFRGKMLRRTLLPIPTIAGNIDLDQKYSETRLEPNERTILHVLESVVIKWSHQIQEVVEKDSVQPLLSGLHSNPETELDFWTMRRENLSCIYDQLQAPIVLKMVKILKNKQSSYFPTLRDIFLSVKNALREAQDVELYLRPLRRHIQCLQETEFPQTRVLIAPLFHTICLIWSHSKFYNTPARVIVLLQEFCNLFIDQARAYLSPEHLLKGELEDSLEKVQVVINVFKTFKNSFFNYRKGLASYFMGKKEMKPWDFRSHLVFWRFDKFLDRFMKIEDIFVTTLEFEKLERLEFGGTKGAIFNGQIHEMSEELMELCKVFKQSTYDPSDYNNMEFESEYAMFKSKTVDFDRRLGTILCVALFNCNGLEAAFKLLTIFGNFLEKPVVMEIFSPHYSTLVHMFNAELDMCKQLYNEHVKQIEQGTVVLNKNMPFTSGNIKWAKEVLDRLQMFWSNFASLRYLSLESPDDAVVYQKYTEMTTLLDQFENHVYNEWKSNVEEICDFSLNQPLIRFSAVNGLLSVNFDPKLVAVLREVKYLLMLKKSDIPDSALAIFKKRDTLLKYIGNLELLVQGYNKLRQTLLDVEYPLIKDELRAVDEELQAAATSLTWQDDCLRDIERVKTATSELERRVEHTHDNVRAIQQMMRAWAEGTLLPRREHRRETALTWEDKGDLFMKKYKQIQEDGCKIHSLVEENRRLFKANPSLDTWKIYVEFIDDIVVEGFFQTIMHDLDFFLMNTEKQLKPAPFFQAQMILMPPEILFKPSLEREAGDGFYDLVEEMLCSSFRMSAQMKRVAAHLGVANYQNDMDNMLGLAEVRQEIMKRVADVISKVLDFRSTLDMYAYLWVDDRAEFMKHFLLYGHIVSSEETDPLADEDIPEQSPTLEQFKEQIDIYEALYVQMSKFDDFRVFDSWFKVDMKPFKVSLLNIIRKWSWMFQEHLLRFVIDSLNELQEFIKETDAGLQRELSEGDHDGLVDIMGHLLAVRSRQRATDELFEPLKETITLLETYGQKMPEQIYVQLEELPERWETTKKIAATVRHEVSPLQNAEVTLIRKKCISFDEKQAEFRERFRLCAPLGFNAENPYTVLDKAHQELEALEEEVLQMQESTHVFEVALPEYKQMKQCRKEIKLLKGLWDVIIYVRRSIDNWTKTQWRQINVEQMDVELRRFAKEIWSLDKEVRVWDAYSGLEGTVKDMTTSLRAVAELQSPALRDRHWHQLMKAIGVKFSINEAMTLADLLALQLHQVEEDVRSIVDKAVKELGTEKVINEIIQTWATMEFSYEVHYRTGIPLLKSDEQLFETLEHNQVQLQTLLQSKYVEYFIEQVTSWQHKLNTADSAIFTWMEVQRTWSHLESIFVCSEDVRIQLKEDARRFDEVDVEFKELMFRTAKIKNVLQATCRPNLCEKLKDLQYRLSLCEKALAEYLETKRVAFPRFYFISSADLLDILSKGAQPAQVTRHLSKLFDSIADLRFEDDQDVSASRAVGMYSKEKEYVPFSATCECTGHVETWLLQLEQIMKETVRHSITEAIAAYEDKPREVWIFDFPAQVALTSSQIWWTTDVGIAFSRLEEGYETALKDFHKKQISQLNTLIALLLGELLPGDRQKIMTICTIDVHARDVVAKLISQKVRSPQAFAWLSQLRHQWEDTRKHCLVHICDAQFQYFYEYLGNSPRLVITPLTDRCYITLTQSLHLTMSGAPAGPAGTGKTETTKDLGRALGMMVYVFNCSEQMDYKSIGNIYKGLVQTGAWGCFDEFNRISVEVLSVVAVQVKMIHDAIRNRKKRFVFLGEAITLKPSVGIFITMNPGYAGRTELPENLKALFRPCAMVAPDIELICEIMLVAEGFVDARSLAHKFITLYTLCRELLSKQDHYDWGLRAVKSVLVVAGSLKRGDKSRPEEQVLMRALRDFNMPKIVTDDIPVFLGLVSDLFPALDVPRRRAPHFEQMVRQSTVELRLQPEENFILKVVQLEELLAVRHSVFVIGNAGTGKSKILRTLNRTYVNMKQKPVWNDLNPKAVTTDELFGFIHHATREWKDGNVVYSLIGLFSSLLREQANLRQDGPKWIVLDGDIDPMWIESLNTVMDDNKVLTLASNERIALTPSMRLLFEIHHLRTATPATVSRAGILYVNPQDLGWNPYVASWIDRRRHQSEKANLTILFDKYVPACLDKLRTSFKTITSIPESSLVQTVCTLLECLLTPENVPSDSPKDVYEVYFVFACVWAFGGTLSQDQLSGCQAEFSRWWHKEMKAVKFPSQGTIFDYYLDHKTKKFLPWADKIPKFTMDPEVPLQRVLVHTSETTRLRYFIELLLEKGQPLMLVGNAGVGKTVFVGDMLTSLSEAYIVSRVPFNYYTTSAALQRILEKPLEKKAGRNYGPGGNKKMVYFIDDMNMPEVDLYGTVQPHTLIRQHIDYGHWYDRQKVRLKEIHGCQYVACMNPMVGSFTINPRLQRHFTVFAFNFPSMDALNTIYSQILSSHFQHQAFGPSVLRSGPALIQATIAFHQTMTHNFLPTAIKFHYLFNLRDLSNVFQGILFASSECLKGPNDLIQLWLHESYRVYGDRLIDTKDCNLFQKKMLETANKYFEGVDSQLLLQQPLIYCHFANGKEDLCYMPVKDWEVLKTFLTEALDNYNDLNAAMPLVLFEDAMQHVCRISRILQTPQGSALLIGVGGSGKQSLSRLAAYICGLEVFQVTLTQGFGIQELRVDLANLYIRTGAKNLPTAFLLTDAQVLDESFLVLINDLLASGEIPDLFSDEDVDKIISGIRNEVRSLGMVDSKENCWKFFLARARLHLKIILCFSPVGHTLRDRARKFPALVNCTAVDWFHAWPREALVTVSRRFIEETRGIEPLDKDSISLFMAHVHTSVNEMSTRFYQNEGRHNYTTPKSFLEQISLFKNLLKKKQKEVSQKKEHLVNGIQKLKTTASQVGALKARLASQEAELQLRNQDAEALIAKIGLQTEKVSREKAIADAEERKVTAIQTEVSQKQRECEADLLKAEPALVAATAALNTLNRVNLTELKVFPNPPNAVTNVTAAVMVLLAPQGRVPKDRSWKAAKVFMGKVDDFLQALINYDKEHIPENCLKVVNEQYLKDPEFNPNLIRTKSFAAAGLCAWVINIIKFYEVYCDVEPKRHALAQANLELATATEKLEAIRKKLADLDRNLSRLTASFEKAIAEKVRCQEEVNQTNKTIKLANRLVKELEVKKIRWGQSIKSFEAQEKTLCGDILLTAAYVSYVGPFTQQYRQELVDCMWVPFLHWKVSIPMTEGLDVIAMLTDDATIATWNNEGLPNDRMSTENAAILTHCQRWPLMIDPQQQGIKWIKKKYGTDLKVTHLGQKGFLNDIETALAFGDVILIENLEETIDPVLDPLLGRNTIKKGKYIKIGDKECEFNHNFRLILHTKLANPHYKPELQAQTTLLNFTVTQDGLEAQLLAEVVSIERPDLEKLKLVLTKHQNDCKIELKYLEDDLLLRLSAAEGSFLDDTKLVERLETAKATAAEIERKVIEARENERKINEARERYRPVAARASLLYFVINDLRKINPIYQFSLKAFNLLFQRAIEQADKVEDAQGRISALTESITHAVFLSTSQALFEKDKLTFLSQMAFQILLRKKEIDPLELDFLLRFTVEHTYPSPVDFLTPQAWSALKAVALREEFRGLDRDVEGSAKQWRRWAESECPEKEKLPQEWKKKSLIQKLIILRALRPDRMTYALRNFVEEKLGAKYVERTRLDLIKALEESSPACPVFFILSPGVDALKDLEILGKRLGFTSDLGTFHNVSLGQGQEMVAEVALEKASKGGHWVMLQNVHLVAKWLGTLEKLLERFSQGSHRDYRVFMSAESAPTPHEHVIPPGLLENSIKITNEPPTGMLANLHAALYNFDQDTLEACSKEQEFKSILFSLCYFHACVAGRLRFGPQGWSRSYPFSPRDLTICAHVLYNYLEANPHVPWEDLRYLFGEIMYGGHVTDEWDRKLCRVYLEEFMNPSLIDDELMLAPGFAAPPNLDYSGYHQYIEEMLPPESPALYGLHPNAEIEFLTVTSNTLFRTLLEIQPKNALSNEELGQSTEDKVKNVLEDILEKLPEEFNMAEIMQKNPNRSPYVLVCFQECERMNILLQEIRVSLQRLDLGLKGELTLSPDMEAQQSALSYDAVPDTWSKVAYPSTYGLAQWFNDLLLRCRELDTWTQDLALPAVVWLSGFFNPQSFLTAIMQTMARKNEWPLDKMCLTIDVTKKMKEDYGHAPREGAYLHGLLLEGARWDSQSGTIVDAHLKELRSAMPVIFAKAIPMDRQETKHTYECPVYRTKMRGPNYVWTFRLKSKEKTAKWVLAGVALLLEA.

Positions 1 to 1857 (MAASVAAQEA…LVHICDAQFQ (1857 aa)) are stem. 4 AAA regions span residues 1858-2079 (YFYE…VLVV), 2139-2368 (QMVR…TSFK), 2474-2721 (TMDP…VFQG), and 2819-3068 (NYND…EGRH). ATP is bound by residues 1896 to 1903 (GPAGTGKT), 2177 to 2184 (GNAGTGKS), 2512 to 2519 (GNAGVGKT), and 2857 to 2864 (GVGGSGKQ). The tract at residues 3074-3405 (KSFLEQISLF…GQSIKSFEAQ (332 aa)) is stalk. The stretch at 3322-3391 (LAQANLELAT…NRLVKELEVK (70 aa)) forms a coiled coil. AAA stretches follow at residues 3461–3688 (LTDD…EIER) and 3898–4124 (LRNF…VLYN).

The protein belongs to the dynein heavy chain family. In terms of assembly, consists of at least two heavy chains and a number of intermediate and light chains. Interacts with CFAP45.

It localises to the cytoplasm. Its subcellular location is the cytoskeleton. The protein resides in the cilium axoneme. Functionally, force generating protein of respiratory cilia. Produces force towards the minus ends of microtubules. Dynein has ATPase activity; the force-producing power stroke is thought to occur on release of ADP. This is Dynein axonemal heavy chain 11 (DNAH11) from Sus scrofa (Pig).